Reading from the N-terminus, the 950-residue chain is Protocadherin alpha-6 (950 aa).

Residues 1–29 (MVFTPEDRLGKQCLLLPLLLLAAWKVGSG) form the signal peptide. Residues 30–697 (QLHYSVPEEA…GPEAALVDVN (668 aa)) are Extracellular-facing. 6 consecutive Cadherin domains span residues 34 to 133 (SVPE…PPLF), 157 to 242 (ASDA…APTF), 243 to 350 (EQSE…VPEI), 351 to 455 (ALTS…APAF), 456 to 565 (AQPE…APAL), and 581 to 678 (VPRS…APKA). 4 N-linked (GlcNAc...) asparagine glycosylation sites follow: N257, N265, N386, and N548. A helical membrane pass occupies residues 698 to 718 (VYLIIAICAVSSLLVLTLLLY). Topologically, residues 719–950 (TALRCSAPPT…GNSTTDNSDQ (232 aa)) are cytoplasmic. 4 PXXP repeats span residues 799–802 (PRQP), 832–835 (PGGP), 873–876 (PGNP), and 891–894 (PGSP). The interval 799–894 (PRQPNPDWRY…PDKFIIPGSP (96 aa)) is 4 X 4 AA repeats of P-X-X-P. The interval 830 to 950 (AGPGGPDQQW…GNSTTDNSDQ (121 aa)) is disordered. Residues 909–923 (DKSDFITFGKKEETK) are compositionally biased toward basic and acidic residues.

It localises to the cell membrane. Its subcellular location is the secreted. Its function is as follows. Potential calcium-dependent cell-adhesion protein. May be involved in the establishment and maintenance of specific neuronal connections in the brain. In Homo sapiens (Human), this protein is Protocadherin alpha-6 (PCDHA6).